A 755-amino-acid chain; its full sequence is 1,4-alpha-glucan branching enzyme GlgB (755 aa).

Aspartate 431 functions as the Nucleophile in the catalytic mechanism. Glutamate 484 (proton donor) is an active-site residue.

Belongs to the glycosyl hydrolase 13 family. GlgB subfamily. In terms of assembly, monomer.

The catalysed reaction is Transfers a segment of a (1-&gt;4)-alpha-D-glucan chain to a primary hydroxy group in a similar glucan chain.. The protein operates within glycan biosynthesis; glycogen biosynthesis. Catalyzes the formation of the alpha-1,6-glucosidic linkages in glycogen by scission of a 1,4-alpha-linked oligosaccharide from growing alpha-1,4-glucan chains and the subsequent attachment of the oligosaccharide to the alpha-1,6 position. This is 1,4-alpha-glucan branching enzyme GlgB from Prochlorococcus marinus (strain NATL2A).